A 227-amino-acid chain; its full sequence is Ribonuclease 3 (227 aa).

An RNase III domain is found at 5 to 127 (YQKLSRRIGY…IIGAMYLDAG (123 aa)). Glutamate 40 contacts Mg(2+). Residue aspartate 44 is part of the active site. Residues aspartate 113 and glutamate 116 each contribute to the Mg(2+) site. Residue glutamate 116 is part of the active site. The DRBM domain occupies 154-224 (DAKTRLQEFL…AAKALKKLEK (71 aa)).

Belongs to the ribonuclease III family. Homodimer. Mg(2+) is required as a cofactor.

The protein localises to the cytoplasm. The catalysed reaction is Endonucleolytic cleavage to 5'-phosphomonoester.. In terms of biological role, digests double-stranded RNA. Involved in the processing of primary rRNA transcript to yield the immediate precursors to the large and small rRNAs (23S and 16S). Processes some mRNAs, and tRNAs when they are encoded in the rRNA operon. Processes pre-crRNA and tracrRNA of type II CRISPR loci if present in the organism. The protein is Ribonuclease 3 of Marinomonas sp. (strain MWYL1).